The primary structure comprises 61 residues: Ferredoxin-2 (61 aa).

4Fe-4S ferredoxin-type domains are found at residues His2 to Asp27 and Glu28 to Val61. Cys8, Cys11, Cys14, Cys18, Cys37, Cys40, Cys49, and Cys53 together coordinate [4Fe-4S] cluster.

It depends on [4Fe-4S] cluster as a cofactor.

Its function is as follows. Ferredoxins are iron-sulfur proteins that transfer electrons in a wide variety of metabolic reactions. The polypeptide is Ferredoxin-2 (Chlorobium limicola).